A 2698-amino-acid chain; its full sequence is Chromodomain-helicase-DNA-binding protein 6 (2698 aa).

3 stretches are compositionally biased toward basic and acidic residues: residues methionine 1–leucine 12, glutamate 100–proline 115, and glutamate 122–cysteine 171. Positions methionine 1 to arginine 243 are disordered. The interval methionine 1 to histidine 746 is required for DNA-dependent ATPase activity. Low complexity predominate over residues glutamine 213 to glutamate 224. Chromo domains lie at asparagine 291–arginine 342 and isoleucine 374–glutamate 438. The Helicase ATP-binding domain occupies leucine 472–serine 646. Aspartate 485 to threonine 492 contacts ATP. The DEAH box signature appears at aspartate 597–histidine 600. The region spanning leucine 786–leucine 955 is the Helicase C-terminal domain. Residues serine 1318–lysine 1370 are disordered. Residues serine 1320–threonine 1329 show a composition bias toward polar residues. A compositionally biased stretch (basic and acidic residues) spans isoleucine 1332–glycine 1350. Residues arginine 1435 to valine 1489 form the Myb-like domain. Over residues glutamate 1707 to alanine 1730 the composition is skewed to polar residues. Residues glutamate 1707–serine 1731 form a disordered region. Serine 1852 bears the Phosphoserine mark. Disordered stretches follow at residues glycine 1935–isoleucine 2046, leucine 2111–serine 2137, threonine 2308–lysine 2337, proline 2359–leucine 2387, alanine 2538–threonine 2587, and glutamine 2626–asparagine 2698. Basic and acidic residues-rich tracts occupy residues glycine 1943 to arginine 1955, phenylalanine 1975 to glutamate 1991, and serine 2004 to alanine 2024. 2 stretches are compositionally biased toward low complexity: residues serine 2117–serine 2127 and proline 2315–glutamate 2336. Over residues alanine 2538 to threonine 2550 the composition is skewed to low complexity. Over residues lysine 2552–proline 2573 the composition is skewed to basic and acidic residues. Polar residues-rich tracts occupy residues phenylalanine 2578–threonine 2587 and serine 2664–valine 2675. Basic and acidic residues predominate over residues proline 2677–asparagine 2698.

Belongs to the SNF2/RAD54 helicase family. As to quaternary structure, interacts with NFE2L2; involved in activation of the transcription. May interact with PPARA. Widely expressed.

The protein resides in the nucleus. It is found in the nucleoplasm. The catalysed reaction is ATP + H2O = ADP + phosphate + H(+). In terms of biological role, ATP-dependent chromatin-remodeling factor. Regulates transcription by disrupting nucleosomes in a largely non-sliding manner which strongly increases the accessibility of chromatin. Activates transcription of specific genes in response to oxidative stress through interaction with NFE2L2. This chain is Chromodomain-helicase-DNA-binding protein 6 (Chd6), found in Rattus norvegicus (Rat).